The primary structure comprises 359 residues: Ni-sirohydrochlorin a,c-diamide reductive cyclase complex, component CfbD (359 aa).

This sequence belongs to the NifD/NifK/NifE/NifN family. Homodimer or monomer. The Ni-sirohydrochlorin a,c-diamide reductive cyclase complex is composed of a NifH homolog component CfbC and a NifD homolog component CfbD. [4Fe-4S] cluster is required as a cofactor.

The enzyme catalyses Ni-sirohydrochlorin a,c-diamide + 3 AH2 + ATP + H2O = 15,17(3)-seco-F430-17(3)-acid + 3 A + ADP + phosphate. Involved in the biosynthesis of the unique nickel-containing tetrapyrrole coenzyme F430, the prosthetic group of methyl-coenzyme M reductase (MCR), which plays a key role in methanogenesis and anaerobic methane oxidation. Catalyzes both the six-electron reduction of the tetrahydroporphyrin ring system and the gamma-lactamization of the c-acetamide side chain of Ni-sirohydrochlorin a,c-diamide to yield 15,17(3)-seco-F430-17(3)-acid (seco-F430), the last intermediate in the biosynthesis of the coenzyme F430. This is Ni-sirohydrochlorin a,c-diamide reductive cyclase complex, component CfbD from Methanothermobacter thermautotrophicus (strain ATCC 29096 / DSM 1053 / JCM 10044 / NBRC 100330 / Delta H) (Methanobacterium thermoautotrophicum).